Reading from the N-terminus, the 273-residue chain is Shikimate dehydrogenase (NADP(+)) (273 aa).

Shikimate is bound by residues 15–17 (SKS) and T62. K66 serves as the catalytic Proton acceptor. E78 lines the NADP(+) pocket. Positions 87 and 103 each coordinate shikimate. NADP(+)-binding positions include 127 to 131 (GAGGA), 150 to 155 (NRTQEK), and M213. Y215 contacts shikimate. G237 serves as a coordination point for NADP(+).

This sequence belongs to the shikimate dehydrogenase family. As to quaternary structure, homodimer.

It carries out the reaction shikimate + NADP(+) = 3-dehydroshikimate + NADPH + H(+). Its pathway is metabolic intermediate biosynthesis; chorismate biosynthesis; chorismate from D-erythrose 4-phosphate and phosphoenolpyruvate: step 4/7. In terms of biological role, involved in the biosynthesis of the chorismate, which leads to the biosynthesis of aromatic amino acids. Catalyzes the reversible NADPH linked reduction of 3-dehydroshikimate (DHSA) to yield shikimate (SA). This chain is Shikimate dehydrogenase (NADP(+)), found in Shewanella woodyi (strain ATCC 51908 / MS32).